We begin with the raw amino-acid sequence, 473 residues long: Pup--protein ligase (473 aa).

E9 lines the Mg(2+) pocket. An ATP-binding site is contributed by R54. Y56 contacts Mg(2+). The active-site Proton acceptor is D58. E64 contacts Mg(2+). 2 residues coordinate ATP: T67 and W425.

Belongs to the Pup ligase/Pup deamidase family. Pup-conjugating enzyme subfamily.

It catalyses the reaction ATP + [prokaryotic ubiquitin-like protein]-L-glutamate + [protein]-L-lysine = ADP + phosphate + N(6)-([prokaryotic ubiquitin-like protein]-gamma-L-glutamyl)-[protein]-L-lysine.. The protein operates within protein degradation; proteasomal Pup-dependent pathway. It functions in the pathway protein modification; protein pupylation. Catalyzes the covalent attachment of the prokaryotic ubiquitin-like protein modifier Pup to the proteasomal substrate proteins, thereby targeting them for proteasomal degradation. This tagging system is termed pupylation. The ligation reaction involves the side-chain carboxylate of the C-terminal glutamate of Pup and the side-chain amino group of a substrate lysine. The polypeptide is Pup--protein ligase (Brachybacterium faecium (strain ATCC 43885 / DSM 4810 / JCM 11609 / LMG 19847 / NBRC 14762 / NCIMB 9860 / 6-10)).